We begin with the raw amino-acid sequence, 430 residues long: Adenylosuccinate synthetase (430 aa).

GTP-binding positions include 12 to 18 (GDEGKGK) and 40 to 42 (GHT). Residue Asp13 is the Proton acceptor of the active site. Mg(2+) is bound by residues Asp13 and Gly40. IMP-binding positions include 13–16 (DEGK), 38–41 (NAGH), Thr128, Arg142, Gln223, Thr238, and Arg302. His41 serves as the catalytic Proton donor. Substrate is bound at residue 298–304 (TTTGRPR). GTP contacts are provided by residues Arg304, 330–332 (LLD), and 412–414 (SVG).

This sequence belongs to the adenylosuccinate synthetase family. Homodimer. Requires Mg(2+) as cofactor.

It localises to the cytoplasm. It carries out the reaction IMP + L-aspartate + GTP = N(6)-(1,2-dicarboxyethyl)-AMP + GDP + phosphate + 2 H(+). It functions in the pathway purine metabolism; AMP biosynthesis via de novo pathway; AMP from IMP: step 1/2. In terms of biological role, plays an important role in the de novo pathway of purine nucleotide biosynthesis. Catalyzes the first committed step in the biosynthesis of AMP from IMP. The polypeptide is Adenylosuccinate synthetase (Listeria monocytogenes serotype 4b (strain CLIP80459)).